Reading from the N-terminus, the 471-residue chain is 3-isopropylmalate dehydratase large subunit (471 aa).

Cys-347, Cys-407, and Cys-410 together coordinate [4Fe-4S] cluster.

The protein belongs to the aconitase/IPM isomerase family. LeuC type 1 subfamily. Heterodimer of LeuC and LeuD. Requires [4Fe-4S] cluster as cofactor.

It catalyses the reaction (2R,3S)-3-isopropylmalate = (2S)-2-isopropylmalate. It functions in the pathway amino-acid biosynthesis; L-leucine biosynthesis; L-leucine from 3-methyl-2-oxobutanoate: step 2/4. Catalyzes the isomerization between 2-isopropylmalate and 3-isopropylmalate, via the formation of 2-isopropylmaleate. This chain is 3-isopropylmalate dehydratase large subunit, found in Buchnera aphidicola subsp. Baizongia pistaciae (strain Bp).